Reading from the N-terminus, the 687-residue chain is MAKDLFLEIGCEEIPAGFVPKAMADMELLIKKEFDSARIEYGEIVTLGTPRRLVLAVKGVAERQPDAELTAMGPAKSHAYDADGNPTKAAQGFARGQGIDVSQLKLVTTEKGEYLAAVKSEIGRETAELLPEMLPRLIGNIPFKKSMRWADFDVRFARPIHWIAALFDGKVVPFSFGNIDSGSASRGHRFMANTPFPVRDLAHYLEECERHFVIPDPNKRKEIIRAEIERVAKQAKGNVLPDEALLEQVSYLVEYPSAVHGTFSPDFLVVPREVLITSMREHQRYFSLVDDEGKLLPGFITINNTITEDPQVVVKGNERVLRARLSDARFFFDEDHKVRLETRVESLKSVVYQAKLGTSYEKMERFRELGKRLAQRLNPSVIKQVERAATLCKADLVSGMVGEFPEVQGIMGREYALHDGEEPAVANAIAEHYLPTQAGGELPASDIGAFVSLADKMDTICGCFCVGLIPTGSADPYALRRSALGIINIILEKGYREPLSEFVKASLDLLAAKATRPLAEVQKDVLDFFRGRFVNLMADRFPSDAVEAVASVSFDDLVEAAAKIEALAGFRNRDDFGPLAVAFKRVCNIVKDGVDTPVSAELFQDAAEGELHQALTQVSGKVADALKKADYLAALTEIATLKPAVDLFFEKVMVMADDERVRQNRLALLTGIARLFASLADFSRLSP.

Belongs to the class-II aminoacyl-tRNA synthetase family. In terms of assembly, tetramer of two alpha and two beta subunits.

It localises to the cytoplasm. The enzyme catalyses tRNA(Gly) + glycine + ATP = glycyl-tRNA(Gly) + AMP + diphosphate. The polypeptide is Glycine--tRNA ligase beta subunit (Geobacter sp. (strain M21)).